Here is a 339-residue protein sequence, read N- to C-terminus: MHIGTTLSQFIIEETRLYPGASGDFAGLLNDLTTSCKFIGAQVYRGALVGALGSAGTDNVQGEVQKKLDIISNEAILKSMDWTGHLAGMASEEMDDPYPIPRNIPRGKYLLLFDPLDGSSNTDVGISVGTIFSILKAPVAGRDAELADFLQPGVEQVCAGYALYGSSNMLVYSTGYGVNGFTLDPSIGEYILTHNQMRIPEDTSEYAINMSNHRHWQKPVQRYIDELNQGTDGPRQRDFNMRWVGSMVADVHRILCRGGIFLYPFDQRDPKKPGKLRLLYEANPMSYLVEQAGGAASTGTTRILDIVPQGLHQRIPVILGAKNEVERVVAYHQGSFVIP.

The Mg(2+) site is built by E92, D114, L116, and D117. Substrate-binding positions include 117–120, N209, and K275; that span reads DGSS. E281 contributes to the Mg(2+) binding site.

It belongs to the FBPase class 1 family. Homotetramer. Mg(2+) serves as cofactor.

It localises to the cytoplasm. The catalysed reaction is beta-D-fructose 1,6-bisphosphate + H2O = beta-D-fructose 6-phosphate + phosphate. Its pathway is carbohydrate biosynthesis; gluconeogenesis. This chain is Fructose-1,6-bisphosphatase class 1, found in Acidithiobacillus ferrooxidans (strain ATCC 53993 / BNL-5-31) (Leptospirillum ferrooxidans (ATCC 53993)).